We begin with the raw amino-acid sequence, 614 residues long: DNA mismatch repair protein MutL (614 aa).

Belongs to the DNA mismatch repair MutL/HexB family.

In terms of biological role, this protein is involved in the repair of mismatches in DNA. It is required for dam-dependent methyl-directed DNA mismatch repair. May act as a 'molecular matchmaker', a protein that promotes the formation of a stable complex between two or more DNA-binding proteins in an ATP-dependent manner without itself being part of a final effector complex. The polypeptide is DNA mismatch repair protein MutL (Thermoanaerobacter pseudethanolicus (strain ATCC 33223 / 39E) (Clostridium thermohydrosulfuricum)).